A 459-amino-acid polypeptide reads, in one-letter code: Trichothecene 3-O-acetyltransferase TRI101 (459 aa).

2 residues coordinate Ca(2+): Asp-218 and Ile-221. CoA-binding positions include Lys-253, 266–269, Asp-302, Gln-318, and Arg-343; that span reads FVST. Asp-376 is a binding site for Ca(2+). CoA is bound by residues Ser-386 and Lys-390. Residue Glu-449 participates in Ca(2+) binding.

It belongs to the trichothecene 3-O-acetyltransferase family.

Its pathway is sesquiterpene biosynthesis; trichothecene biosynthesis. Functionally, 3-O-acetyltransferase involved in the biosynthesis of trichothecenes, a very large family of chemically related bicyclic sesquiterpene compounds acting as mycotoxins, including T2-toxin. The biosynthesis of trichothecenes begins with the cyclization of farnesyl diphosphate to trichodiene and is catalyzed by the trichodiene synthase TRI5. Trichodiene undergoes a series of oxygenations catalyzed by the cytochrome P450 monooxygenase TRI4. TRI4 controls the addition of four oxygens at C-2, C-3, C-11, and the C-12, C-13-epoxide to form the intermediate isotrichotriol. Isotrichotriol then undergoes a non-enzymatic isomerization and cyclization to form isotrichodermol. During this process, the oxygen at the C-2 position becomes the pyran ring oxygen and the hydroxyl group at C-11 is lost. More complex type A trichothecenes are built by modifying isotrichodermol through a series of paired hydroxylation and acetylation or acylation steps. Isotrichodermol is converted to isotrichodermin by the acetyltransferase TRI101. TRI101 encodes a C-3 transacetylase that acts as a self-protection or resistance factor during biosynthesis and that the presence of a free C-3 hydroxyl group is a key component of Fusarium trichothecene phytotoxicity. A second hydroxyl group is added to C-15 by the trichothecene C-15 hydroxylase TRI11, producing 15-decalonectrin, which is then acetylated by TRI3, producing calonectrin. A third hydroxyl group is added at C-4 by the cytochrome P450 monooxygenase TRI13, converting calonectrin to 3,15-diacetoxyspirpenol, which is subsequently acetylated bythe acetyltransferase TRI7. A fourth hydroxyl group is added to C-8 by the cytochrome P450 monooxygenase TRI1, followed by the addition of an isovaleryl moiety by TRI16. Finally, the acetyl group is removed from the C-3 position by the trichothecene C-3 esterase TRI8 to produce T-2 toxin. This Fusarium sporotrichioides protein is Trichothecene 3-O-acetyltransferase TRI101.